Here is a 555-residue protein sequence, read N- to C-terminus: CTP synthase (555 aa).

Positions 1 to 267 (MAKYIFVTGG…GNYLTLRLGL (267 aa)) are amidoligase domain. Ser-13 contacts CTP. Ser-13 is a UTP binding site. 14 to 19 (SVGKGI) contributes to the ATP binding site. L-glutamine is bound at residue Tyr-54. Asp-71 provides a ligand contact to ATP. 2 residues coordinate Mg(2+): Asp-71 and Glu-141. CTP-binding positions include 148–150 (DIE), 188–193 (KTKPTQ), and Lys-224. UTP-binding positions include 188–193 (KTKPTQ) and Lys-224. Positions 292 to 535 (AIALVGKYVE…IAAAAQTFRE (244 aa)) constitute a Glutamine amidotransferase type-1 domain. Gly-354 contributes to the L-glutamine binding site. The active-site Nucleophile; for glutamine hydrolysis is the Cys-381. L-glutamine contacts are provided by residues 382–385 (LGMQ), Glu-406, and Arg-463. Catalysis depends on residues His-508 and Glu-510.

It belongs to the CTP synthase family. As to quaternary structure, homotetramer.

It catalyses the reaction UTP + L-glutamine + ATP + H2O = CTP + L-glutamate + ADP + phosphate + 2 H(+). The catalysed reaction is L-glutamine + H2O = L-glutamate + NH4(+). The enzyme catalyses UTP + NH4(+) + ATP = CTP + ADP + phosphate + 2 H(+). Its pathway is pyrimidine metabolism; CTP biosynthesis via de novo pathway; CTP from UDP: step 2/2. Allosterically activated by GTP, when glutamine is the substrate; GTP has no effect on the reaction when ammonia is the substrate. The allosteric effector GTP functions by stabilizing the protein conformation that binds the tetrahedral intermediate(s) formed during glutamine hydrolysis. Inhibited by the product CTP, via allosteric rather than competitive inhibition. Its function is as follows. Catalyzes the ATP-dependent amination of UTP to CTP with either L-glutamine or ammonia as the source of nitrogen. Regulates intracellular CTP levels through interactions with the four ribonucleotide triphosphates. In Roseiflexus castenholzii (strain DSM 13941 / HLO8), this protein is CTP synthase.